Here is a 664-residue protein sequence, read N- to C-terminus: Macrolide export ATP-binding/permease protein MacB (664 aa).

The region spanning 8-245 (LELVDVHRTY…AGPSVPLTLD (238 aa)) is the ABC transporter domain. 44 to 51 (GSSGSGKS) contributes to the ATP binding site. 4 helical membrane passes run 283–303 (LLSVLGILVGVASVIAMMALG), 543–563 (GAIAAISLLVGGIGIMNIMLV), 602–622 (IIGIIAGIGISALLAVFAGWA), and 627–647 (IVSIVLATFFSAITGIFFGLW).

Belongs to the ABC transporter superfamily. Macrolide exporter (TC 3.A.1.122) family. Homodimer.

It is found in the cell inner membrane. Non-canonical ABC transporter that contains transmembrane domains (TMD), which form a pore in the inner membrane, and an ATP-binding domain (NBD), which is responsible for energy generation. Confers resistance against macrolides. This chain is Macrolide export ATP-binding/permease protein MacB, found in Chlorobium luteolum (strain DSM 273 / BCRC 81028 / 2530) (Pelodictyon luteolum).